The following is a 126-amino-acid chain: Hydrogenase maturation factor HypA (126 aa).

Residue histidine 2 participates in Ni(2+) binding. Residues cysteine 78, cysteine 81, cysteine 97, and cysteine 100 each coordinate Zn(2+).

This sequence belongs to the HypA/HybF family.

Functionally, involved in the maturation of [NiFe] hydrogenases. Required for nickel insertion into the metal center of the hydrogenase. The sequence is that of Hydrogenase maturation factor HypA from Methanococcus maripaludis (strain C5 / ATCC BAA-1333).